Consider the following 348-residue polypeptide: D-amino-acid oxidase (348 aa).

6 residues coordinate FAD: Ala-15, Ile-18, Lys-40, Ser-52, Gly-56, and Asn-58. (R)-lactate is bound by residues Tyr-232 and Arg-295. Residues Tyr-232 and Arg-295 each coordinate anthranilate. Residues Arg-295, Ser-323, Gly-326, Tyr-327, and Gln-328 each contribute to the FAD site.

It belongs to the DAMOX/DASOX family. The cofactor is FAD.

The protein resides in the peroxisome. The catalysed reaction is a D-alpha-amino acid + O2 + H2O = a 2-oxocarboxylate + H2O2 + NH4(+). It carries out the reaction D-serine + O2 + H2O = 3-hydroxypyruvate + H2O2 + NH4(+). The enzyme catalyses D-alanine + O2 + H2O = pyruvate + H2O2 + NH4(+). It catalyses the reaction D-arginine + O2 + H2O = 5-guanidino-2-oxopentanoate + H2O2 + NH4(+). In terms of biological role, catalyzes the oxidative deamination of D-amino acids with broad substrate specificity. Enables the organism to utilize D-amino acids as a source of nutrients. The chain is D-amino-acid oxidase from Schizosaccharomyces pombe (strain 972 / ATCC 24843) (Fission yeast).